The following is an 839-amino-acid chain: Dynein axonemal assembly factor 5 (839 aa).

HEAT repeat units follow at residues 10-48 (TSDV…DEKL), 54-92 (QHVF…HVPR), 94-137 (EEAL…VCGK), 140-178 (APYL…CIPE), 181-219 (HMQA…YSSG), 221-257 (SVDD…KLQD), 259-297 (YSFF…QWEK), 578-617 (GETL…KASE), 675-713 (LQVE…TCER), 717-755 (PDKL…CITD), and 723-761 (IYPE…ERTT).

This sequence belongs to the DNAAF5 family. Interacts with DNAI2; probably involved in outer arm dynein assembly.

It is found in the cytoplasm. It localises to the dynein axonemal particle. Cytoplasmic protein involved in the delivery of the dynein machinery to the motile cilium. It is required for the assembly of the axonemal dynein inner and outer arms, two structures attached to the peripheral outer doublet A microtubule of the axoneme, that play a crucial role in cilium motility. The sequence is that of Dynein axonemal assembly factor 5 from Xenopus laevis (African clawed frog).